The following is a 637-amino-acid chain: Early transcription factor 70 kDa subunit (637 aa).

Positions 32–185 constitute a Helicase ATP-binding domain; it reads RTIIDENRSV…GHIIDLMSEE (154 aa). 45–52 contributes to the ATP binding site; the sequence is HIMGSGKT. A DEXH box motif is present at residues 135-138; that stretch reads DEAH. The 181-residue stretch at 327–507 folds into the Helicase C-terminal domain; it reads KFKYFINRIQ…VLPFDIKKLL (181 aa).

The protein belongs to the helicase family. VETF subfamily. As to quaternary structure, heterodimer of a 70 kDa and a 82 kDa subunit. Part of the early transcription complex composed of ETF, RAP94/OPG109, and the DNA-directed RNA polymerase.

The protein localises to the virion. Functionally, acts with RNA polymerase to initiate transcription from early gene promoters. Is recruited by the RPO-associated protein of 94 kDa RAP94/OPG109 to form the early transcription complex, which also contains the core RNA polymerase. ETF heterodimer binds to early gene promoters. This Homo sapiens (Human) protein is Early transcription factor 70 kDa subunit (OPG118).